A 359-amino-acid chain; its full sequence is DNA replication and repair protein RecF (359 aa).

30 to 37 contributes to the ATP binding site; it reads GKNGIGKT.

This sequence belongs to the RecF family.

It is found in the cytoplasm. The RecF protein is involved in DNA metabolism; it is required for DNA replication and normal SOS inducibility. RecF binds preferentially to single-stranded, linear DNA. It also seems to bind ATP. In Flavobacterium johnsoniae (strain ATCC 17061 / DSM 2064 / JCM 8514 / BCRC 14874 / CCUG 350202 / NBRC 14942 / NCIMB 11054 / UW101) (Cytophaga johnsonae), this protein is DNA replication and repair protein RecF.